A 203-amino-acid polypeptide reads, in one-letter code: dTTP/UTP pyrophosphatase (203 aa).

Aspartate 70 functions as the Proton acceptor in the catalytic mechanism.

This sequence belongs to the Maf family. YhdE subfamily. A divalent metal cation is required as a cofactor.

Its subcellular location is the cytoplasm. It carries out the reaction dTTP + H2O = dTMP + diphosphate + H(+). The enzyme catalyses UTP + H2O = UMP + diphosphate + H(+). Nucleoside triphosphate pyrophosphatase that hydrolyzes dTTP and UTP. May have a dual role in cell division arrest and in preventing the incorporation of modified nucleotides into cellular nucleic acids. This Pseudomonas putida (strain ATCC 47054 / DSM 6125 / CFBP 8728 / NCIMB 11950 / KT2440) protein is dTTP/UTP pyrophosphatase (maf-1).